The following is a 277-amino-acid chain: 3-methyl-2-oxobutanoate hydroxymethyltransferase (277 aa).

Mg(2+) is bound by residues D43 and D82. Residues D43–S44, D82, and K112 each bind 3-methyl-2-oxobutanoate. E114 is a Mg(2+) binding site. The active-site Proton acceptor is the E181.

It belongs to the PanB family. Homodecamer; pentamer of dimers. It depends on Mg(2+) as a cofactor.

The protein localises to the cytoplasm. It carries out the reaction 3-methyl-2-oxobutanoate + (6R)-5,10-methylene-5,6,7,8-tetrahydrofolate + H2O = 2-dehydropantoate + (6S)-5,6,7,8-tetrahydrofolate. Its pathway is cofactor biosynthesis; (R)-pantothenate biosynthesis; (R)-pantoate from 3-methyl-2-oxobutanoate: step 1/2. In terms of biological role, catalyzes the reversible reaction in which hydroxymethyl group from 5,10-methylenetetrahydrofolate is transferred onto alpha-ketoisovalerate to form ketopantoate. The protein is 3-methyl-2-oxobutanoate hydroxymethyltransferase of Listeria innocua serovar 6a (strain ATCC BAA-680 / CLIP 11262).